A 209-amino-acid polypeptide reads, in one-letter code: Thiamine-phosphate synthase (209 aa).

4-amino-2-methyl-5-(diphosphooxymethyl)pyrimidine is bound by residues 39–43 and Asn-71; that span reads QLREK. Residues Asp-72 and Asp-91 each contribute to the Mg(2+) site. Ser-110 contributes to the 4-amino-2-methyl-5-(diphosphooxymethyl)pyrimidine binding site. Residue 136-138 participates in 2-[(2R,5Z)-2-carboxy-4-methylthiazol-5(2H)-ylidene]ethyl phosphate binding; the sequence is TGT. Lys-139 lines the 4-amino-2-methyl-5-(diphosphooxymethyl)pyrimidine pocket. 2-[(2R,5Z)-2-carboxy-4-methylthiazol-5(2H)-ylidene]ethyl phosphate is bound by residues Gly-166 and 186–187; that span reads VS.

This sequence belongs to the thiamine-phosphate synthase family. Mg(2+) is required as a cofactor.

The catalysed reaction is 2-[(2R,5Z)-2-carboxy-4-methylthiazol-5(2H)-ylidene]ethyl phosphate + 4-amino-2-methyl-5-(diphosphooxymethyl)pyrimidine + 2 H(+) = thiamine phosphate + CO2 + diphosphate. The enzyme catalyses 2-(2-carboxy-4-methylthiazol-5-yl)ethyl phosphate + 4-amino-2-methyl-5-(diphosphooxymethyl)pyrimidine + 2 H(+) = thiamine phosphate + CO2 + diphosphate. It catalyses the reaction 4-methyl-5-(2-phosphooxyethyl)-thiazole + 4-amino-2-methyl-5-(diphosphooxymethyl)pyrimidine + H(+) = thiamine phosphate + diphosphate. Its pathway is cofactor biosynthesis; thiamine diphosphate biosynthesis; thiamine phosphate from 4-amino-2-methyl-5-diphosphomethylpyrimidine and 4-methyl-5-(2-phosphoethyl)-thiazole: step 1/1. Condenses 4-methyl-5-(beta-hydroxyethyl)thiazole monophosphate (THZ-P) and 2-methyl-4-amino-5-hydroxymethyl pyrimidine pyrophosphate (HMP-PP) to form thiamine monophosphate (TMP). In Clostridium beijerinckii (strain ATCC 51743 / NCIMB 8052) (Clostridium acetobutylicum), this protein is Thiamine-phosphate synthase.